We begin with the raw amino-acid sequence, 332 residues long: Tyrosine--tRNA ligase (332 aa).

Residues tyrosine 32, tyrosine 156, glutamine 160, aspartate 163, and glutamine 178 each coordinate L-tyrosine. The 'KMSKS' region signature appears at 219–223; it reads KMSKS. Lysine 222 lines the ATP pocket.

This sequence belongs to the class-I aminoacyl-tRNA synthetase family. TyrS type 4 subfamily. In terms of assembly, homodimer.

Its subcellular location is the cytoplasm. The catalysed reaction is tRNA(Tyr) + L-tyrosine + ATP = L-tyrosyl-tRNA(Tyr) + AMP + diphosphate + H(+). In terms of biological role, catalyzes the attachment of tyrosine to tRNA(Tyr) in a two-step reaction: tyrosine is first activated by ATP to form Tyr-AMP and then transferred to the acceptor end of tRNA(Tyr). This chain is Tyrosine--tRNA ligase, found in Thermoplasma acidophilum (strain ATCC 25905 / DSM 1728 / JCM 9062 / NBRC 15155 / AMRC-C165).